The sequence spans 741 residues: NAD(P)H-quinone oxidoreductase subunit 5, chloroplastic (741 aa).

18 helical membrane passes run 9-29 (WIVPFLPLSASVPIGLGSLFF), 40-60 (WALISIFLLSVAMFLSFNLFL), 89-109 (IDPLTSIMLVLVTTVGTMVMI), 124-144 (FFAYLNFFNASMLGLVISPNL), 147-167 (IYIFWELVGMCSYLLIGFWFT), 185-205 (GDFGLLLGILGFYWVTGSFEF), 218-238 (IDGVGSFFVTSCAFLLFLGPV), 258-278 (TPISALIHAATMVAAGIFLVA), 286-306 (ALPLIMYLISWIGGITALLGA), 327-347 (LGYMMLALGIDSYRIALFHLI), 354-374 (ALLFLGSGSVIHSMEPIVGYC), 395-415 (GITFLLGTLSLSGIPPFACFW), 427-447 (YSPIFGGITWFTAGLTAFYMF), 550-570 (FPLVVLGIFTLFVGLIGVPFF), 601-621 (FFIDAIPSVGIAFLGILIACI), 651-671 (IIYNWSFYQAYIDIYYDIILI), 687-707 (WAIDGIPNGVGFLGLFVGEGM), and 719-739 (IFFSLFCVLISILIYYYSFSF).

It belongs to the complex I subunit 5 family. As to quaternary structure, NDH is composed of at least 16 different subunits, 5 of which are encoded in the nucleus.

Its subcellular location is the plastid. The protein resides in the chloroplast thylakoid membrane. The enzyme catalyses a plastoquinone + NADH + (n+1) H(+)(in) = a plastoquinol + NAD(+) + n H(+)(out). It carries out the reaction a plastoquinone + NADPH + (n+1) H(+)(in) = a plastoquinol + NADP(+) + n H(+)(out). Functionally, NDH shuttles electrons from NAD(P)H:plastoquinone, via FMN and iron-sulfur (Fe-S) centers, to quinones in the photosynthetic chain and possibly in a chloroplast respiratory chain. The immediate electron acceptor for the enzyme in this species is believed to be plastoquinone. Couples the redox reaction to proton translocation, and thus conserves the redox energy in a proton gradient. The polypeptide is NAD(P)H-quinone oxidoreductase subunit 5, chloroplastic (ndhF) (Cryptomeria japonica (Japanese cedar)).